The chain runs to 240 residues: Bidirectional sugar transporter SWEET7c (240 aa).

Topologically, residues 1-12 (MVSPDLIRNVVG) are extracellular. The region spanning 10 to 48 (VVGIVGNVISFGLFLSPVPIFWWIIKNKNVQNFKADPIL) is the MtN3/slv 1 domain. The chain crosses the membrane as a helical span at residues 13–33 (IVGNVISFGLFLSPVPIFWWI). Over 34–46 (IKNKNVQNFKADP) the chain is Cytoplasmic. A helical transmembrane segment spans residues 47–67 (ILVVTINGISLVIEAVYLTIF). Over 68-78 (FLFSDKKNKKK) the chain is Extracellular. A helical transmembrane segment spans residues 79 to 99 (MGVVLATEALFMAAVAVGVLL). Residues 100 to 108 (GAHTHQRRS) lie on the Cytoplasmic side of the membrane. Residues 109–129 (LIVGILCVIFGTIMYSSPLTI) traverse the membrane as a helical segment. In terms of domain architecture, MtN3/slv 2 spans 110 to 191 (IVGILCVIFG…LILYAIYYRT (82 aa)). Residues 130–140 (MVVKTKSVEYM) lie on the Extracellular side of the membrane. A helical membrane pass occupies residues 141-161 (PLLLSVVSFLNGLCWTLYALI). At 162–164 (RFD) the chain is on the cytoplasmic side. The helical transmembrane segment at 165–185 (IFITIPNGLGVLFAIMQLILY) threads the bilayer. At 186 to 240 (AIYYRTTPKKQDKNLELPTVAPIAKDTSIVAPVGNDDDVNGSTASHATINITIEP) the chain is on the extracellular side. N-linked (GlcNAc...) asparagine glycans are attached at residues N225 and N235.

This sequence belongs to the SWEET sugar transporter family. Forms homooligomers and/or heterooligomers.

Its subcellular location is the cell membrane. In terms of biological role, mediates both low-affinity uptake and efflux of sugar across the plasma membrane. The polypeptide is Bidirectional sugar transporter SWEET7c (SWEET7C) (Oryza sativa subsp. indica (Rice)).